The sequence spans 144 residues: Flagellar assembly factor FliW (144 aa).

The protein belongs to the FliW family. In terms of assembly, interacts with translational regulator CsrA and flagellin(s).

It localises to the cytoplasm. Functionally, acts as an anti-CsrA protein, binds CsrA and prevents it from repressing translation of its target genes, one of which is flagellin. Binds to flagellin and participates in the assembly of the flagellum. The protein is Flagellar assembly factor FliW of Geobacillus kaustophilus (strain HTA426).